A 303-amino-acid polypeptide reads, in one-letter code: MTTIESQCSIDGILLLNKPQGMTSNAALQKAKHLFGAKKAGHTGSLDPLATGMLPLCFGEATKICQYLLNADKSYETIGRLGSKTNTADCTGEVIFCIENYTVSHEEMIATLEKYKGKIKQIPSMFSALKHKGTPLYRLAREGIEIERKARDIVISQLKLEQFDGECFTLTVSCSKGTYIRNLVEDIGDTLKAGAHMTKLHRLYTAGFENNRMYTLDELQDMPLSQRLACLIPIDQAIQHLTPVILSDSEVTAIRQGKVISNKTGAVEGEDLRLYGEQSQFIGIGQALIHGDIKAKRLVSFAL.

D47 (nucleophile) is an active-site residue.

It belongs to the pseudouridine synthase TruB family. Type 1 subfamily.

It catalyses the reaction uridine(55) in tRNA = pseudouridine(55) in tRNA. Its function is as follows. Responsible for synthesis of pseudouridine from uracil-55 in the psi GC loop of transfer RNAs. The sequence is that of tRNA pseudouridine synthase B from Legionella pneumophila (strain Paris).